Consider the following 191-residue polypeptide: Fe/S biogenesis protein NfuA (191 aa).

The [4Fe-4S] cluster site is built by Cys-149 and Cys-152.

The protein belongs to the NfuA family. Homodimer. Requires [4Fe-4S] cluster as cofactor.

Involved in iron-sulfur cluster biogenesis. Binds a 4Fe-4S cluster, can transfer this cluster to apoproteins, and thereby intervenes in the maturation of Fe/S proteins. Could also act as a scaffold/chaperone for damaged Fe/S proteins. The chain is Fe/S biogenesis protein NfuA from Hamiltonella defensa subsp. Acyrthosiphon pisum (strain 5AT).